The chain runs to 534 residues: 2,3-bisphosphoglycerate-independent phosphoglycerate mutase (534 aa).

Aspartate 15 and serine 65 together coordinate Mn(2+). The active-site Phosphoserine intermediate is serine 65. Residues histidine 126, 156 to 157, arginine 188, arginine 194, 260 to 263, and lysine 333 contribute to the substrate site; these read RD and RPDR. Mn(2+) contacts are provided by aspartate 400, histidine 404, aspartate 441, histidine 442, and histidine 459.

Belongs to the BPG-independent phosphoglycerate mutase family. In terms of assembly, monomer. Requires Mn(2+) as cofactor.

It catalyses the reaction (2R)-2-phosphoglycerate = (2R)-3-phosphoglycerate. It participates in carbohydrate degradation; glycolysis; pyruvate from D-glyceraldehyde 3-phosphate: step 3/5. Its function is as follows. Catalyzes the interconversion of 2-phosphoglycerate and 3-phosphoglycerate. This Acaryochloris marina (strain MBIC 11017) protein is 2,3-bisphosphoglycerate-independent phosphoglycerate mutase.